The following is a 237-amino-acid chain: 2,3-bisphosphoglycerate-dependent phosphoglycerate mutase (237 aa).

Residues 8-15 (RHGQSAWN), 21-22 (TG), Arg-60, 87-90 (ERHY), Lys-98, 114-115 (RR), and 180-181 (GN) contribute to the substrate site. The active-site Tele-phosphohistidine intermediate is His-9. Catalysis depends on Glu-87, which acts as the Proton donor/acceptor.

Belongs to the phosphoglycerate mutase family. BPG-dependent PGAM subfamily. In terms of assembly, homodimer.

It catalyses the reaction (2R)-2-phosphoglycerate = (2R)-3-phosphoglycerate. It functions in the pathway carbohydrate degradation; glycolysis; pyruvate from D-glyceraldehyde 3-phosphate: step 3/5. Catalyzes the interconversion of 2-phosphoglycerate and 3-phosphoglycerate. This chain is 2,3-bisphosphoglycerate-dependent phosphoglycerate mutase, found in Hyphomonas neptunium (strain ATCC 15444).